The primary structure comprises 447 residues: Transcription factor azf1 (447 aa).

Disordered regions lie at residues 125-155 and 174-199; these read HNGA…NEVE and QSPG…PQSY. Over residues 127–139 the composition is skewed to low complexity; the sequence is GASQQPPGAQSSS. A compositionally biased stretch (polar residues) spans 140–155; that stretch reads NEEGAQGKSSSSNEVE. C2H2-type zinc fingers lie at residues 225–249, 255–279, 285–307, and 313–338; these read YACT…MRAH, FVCK…QRRH, FSCD…KITH, and FTCL…NKFH. A disordered region spans residues 377-447; the sequence is NKGIKGRGKD…EPYFIERQAH (71 aa). Over residues 397-416 the composition is skewed to basic and acidic residues; that stretch reads PGSESRRRIEPLSSTDDKMR. A compositionally biased stretch (polar residues) spans 421–431; that stretch reads GDTSMYNGGSS.

It localises to the nucleus. Its function is as follows. Transcription factor that acts as a positive regulator of ochratoxin A (OTA) biosynthesis via controlling the expression of antioxidant genes and oxidative phosphorylation genes. The protein is Transcription factor azf1 of Aspergillus niger (strain ATCC MYA-4892 / CBS 513.88 / FGSC A1513).